A 413-amino-acid chain; its full sequence is MNAEILAVGTELLMGQIANTNAQYISKRLNDIGVNVYYHSVVGDNSVRLKKCLLAALERCDLVIMTGGLGPTQDDLTKETVAEVLGKKLVLHEESLERIKTFFTRINRKMTDNNVKQAYLPEGCTVVENNSGTAPGCIIEDKGKIVVMLPGPPPEMMPMLDDTVIPYLAEKSGYRIVSKYLRVFGIGESQLEEMIMDLVDKQDRVTIATYAKDGQVTVRLTTKARTEEEGFREILPLQNEIASRLKEALYSTEDEELEYVAAKMLIDNNITIATAESCTGGLISARLTDVPGISKVFNRGIVSYSNEAKMENLGVKPETLEKYGAVSSRTAMEMAEGVRKIASTDIGLAVTGIAGPDGGTDEKPVGLVYVALAHSLGTEVRELRLAGNRNRIRNLTVLNAFDMVRRYVMKLKG.

It belongs to the CinA family.

The polypeptide is Putative competence-damage inducible protein (Acetivibrio thermocellus (strain ATCC 27405 / DSM 1237 / JCM 9322 / NBRC 103400 / NCIMB 10682 / NRRL B-4536 / VPI 7372) (Clostridium thermocellum)).